Reading from the N-terminus, the 943-residue chain is Lactoferrin-binding protein A (943 aa).

The first 27 residues, 1 to 27 (MNKKHGFPLTLTALAIATAFPAYAAQA), serve as a signal peptide directing secretion. The region spanning 52-178 (RRSKEATGLG…LGGAVAFRTK (127 aa)) is the TBDR plug domain. The TBDR beta-barrel domain maps to 189-943 (SWGIQAKTAY…NFSLALEMKF (755 aa)). A TonB C-terminal box motif is present at residues 926–943 (GRYAAPGRNFSLALEMKF).

It belongs to the TonB-dependent receptor family.

The protein localises to the cell outer membrane. Its function is as follows. Unknown. May be an iron-siderophore receptor. This chain is Lactoferrin-binding protein A (lbpA), found in Neisseria meningitidis serogroup B (strain ATCC BAA-335 / MC58).